The sequence spans 1023 residues: Sodium/potassium-transporting ATPase subunit alpha-1 (1023 aa).

Residues 1–5 constitute a propeptide that is removed on maturation; it reads MGKGV. Residues 1-11 show a composition bias toward basic and acidic residues; the sequence is MGKGVGRDKYE. Positions 1–38 are disordered; the sequence is MGKGVGRDKYEPAAVSEHGDKKSKKAKKERDMDELKKE. Over 6-87 the chain is Cytoplasmic; sequence GRDKYEPAAV…NALTPPPTTP (82 aa). The residue at position 9 (Lys-9) is an N6-acetyllysine. Tyr-10 bears the Phosphotyrosine mark. A Phosphoserine; by PKC modification is found at Ser-16. Residue Lys-21 is modified to N6-acetyllysine. Position 23 is a phosphoserine; by PKC (Ser-23). A compositionally biased stretch (basic and acidic residues) spans 28-38; sequence KERDMDELKKE. 2 positions are modified to phosphoserine: Ser-40 and Ser-47. A phosphoinositide-3 kinase binding region spans residues 82 to 84; that stretch reads PPP. The chain crosses the membrane as a helical span at residues 88–108; that stretch reads EWVKFCRQLFGGFSMLLWIGA. Residues 109 to 131 are Extracellular-facing; it reads ILCFLAYGIRSATEEEPPNDDLY. The helical transmembrane segment at 132–152 threads the bilayer; it reads LGVVLSAVVIITGCFSYYQEA. Residues 153–288 lie on the Cytoplasmic side of the membrane; the sequence is KSSKIMESFK…GGQTPIAEEI (136 aa). The disordered stretch occupies residues 216 to 235; sequence SSLTGESEPQTRSPDFTNEN. Residue Ser-228 is modified to Phosphoserine. Residue Tyr-260 is modified to Phosphotyrosine. A helical membrane pass occupies residues 289-308; sequence EHFIHLITGVAVFLGVSFFI. Topologically, residues 309–320 are extracellular; sequence LSLILEYTWLEA. The helical transmembrane segment at 321 to 338 threads the bilayer; the sequence is VIFLIGIIVANVPEGLLA. The Cytoplasmic segment spans residues 339–772; sequence TVTVCLTLTA…EEGRLIFDNL (434 aa). Asp-376 (4-aspartylphosphate intermediate) is an active-site residue. Ser-452 and Ser-484 each carry phosphoserine. Lys-487 provides a ligand contact to ATP. The residue at position 542 (Tyr-542) is a Phosphotyrosine. The tract at residues 596–717 is mediates interaction with SCN7A; it reads RAAVPDAVGK…QGAIVAVTGD (122 aa). Lys-661 is modified (N6-succinyllysine). 2 positions are modified to phosphoserine: Ser-668 and Ser-675. Positions 717 and 721 each coordinate Mg(2+). Residues 773 to 792 traverse the membrane as a helical segment; the sequence is KKSIAYTLTSNIPEITPFLI. At 793-802 the chain is on the extracellular side; that stretch reads FIIANIPLPL. The chain crosses the membrane as a helical span at residues 803–823; sequence GTVTILCIDLGTDMVPAISLA. Topologically, residues 824–843 are cytoplasmic; it reads YEQAESDIMKRQPRNPKTDK. Residues 844–866 form a helical membrane-spanning segment; sequence LVNERLISMAYGQIGMIQALGGF. The Extracellular segment spans residues 867-918; that stretch reads FTYFVILAENGFLPFHLLGIRETWDDRWINDVEDSYGQQWTYEQRKIVEFTC. The chain crosses the membrane as a helical span at residues 919-938; that stretch reads HTAFFVSIVVVQWADLVICK. Topologically, residues 939–951 are cytoplasmic; that stretch reads TRRNSVFQQGMKN. Ser-943 carries the phosphoserine; by PKA modification. Residues 952 to 970 form a helical membrane-spanning segment; it reads KILIFGLFEETALAAFLSY. The Extracellular portion of the chain corresponds to 971 to 985; the sequence is CPGMGAALRMYPLKP. Residues 986 to 1006 form a helical membrane-spanning segment; it reads TWWFCAFPYSLLIFVYDEVRK. The Cytoplasmic segment spans residues 1007-1023; the sequence is LIIRRRPGGWVEKETYY.

The protein belongs to the cation transport ATPase (P-type) (TC 3.A.3) family. Type IIC subfamily. As to quaternary structure, the sodium/potassium-transporting ATPase is composed of a catalytic alpha subunit, an auxiliary non-catalytic beta subunit and an additional regulatory subunit. Interacts with regulatory subunit FXYD1. Interacts with regulatory subunit FXYD3. Interacts with SLC35G1 and STIM1. Interacts with SIK1. Interacts with CLN3; this interaction regulates the sodium/potassium-transporting ATPase complex localization at the plasma membrane. Interacts with SCN7A; activates ATP1A1 P-type sodium:potassium-exchanging transporter activity which indirectly signals to nearby neurons to regulate sodium homeostasis. Post-translationally, phosphorylation on Tyr-10 modulates pumping activity. Phosphorylation of Ser-943 by PKA modulates the response of ATP1A1 to PKC. Dephosphorylation by protein phosphatase 2A (PP2A) following increases in intracellular sodium, leading to increase catalytic activity. In terms of tissue distribution, expressed in the central nervous system, in most motor and sensory axons of the ventral and dorsal roots, as well as in the large motor neurons of the ventral horn (at protein level).

It is found in the cell membrane. It localises to the basolateral cell membrane. The protein resides in the sarcolemma. The protein localises to the cell projection. Its subcellular location is the axon. It is found in the melanosome. The catalysed reaction is K(+)(out) + Na(+)(in) + ATP + H2O = K(+)(in) + Na(+)(out) + ADP + phosphate + H(+). In terms of biological role, this is the catalytic component of the active enzyme, which catalyzes the hydrolysis of ATP coupled with the exchange of sodium and potassium ions across the plasma membrane. This action creates the electrochemical gradient of sodium and potassium ions, providing the energy for active transport of various nutrients. Could also be part of an osmosensory signaling pathway that senses body-fluid sodium levels and controls salt intake behavior as well as voluntary water intake to regulate sodium homeostasis. The chain is Sodium/potassium-transporting ATPase subunit alpha-1 (Atp1a1) from Rattus norvegicus (Rat).